A 464-amino-acid chain; its full sequence is Argininosuccinate lyase (464 aa).

This sequence belongs to the lyase 1 family. Argininosuccinate lyase subfamily.

It is found in the cytoplasm. It catalyses the reaction 2-(N(omega)-L-arginino)succinate = fumarate + L-arginine. The protein operates within amino-acid biosynthesis; L-arginine biosynthesis; L-arginine from L-ornithine and carbamoyl phosphate: step 3/3. The polypeptide is Argininosuccinate lyase (Streptococcus suis (strain 98HAH33)).